The sequence spans 62 residues: MSGRGFLLLALLLLVTVEATKVEKNKPGVLDIPVKSNSDDDSIFRYGRRDMQSPLLSERLRF.

The first 19 residues, 1–19 (MSGRGFLLLALLLLVTVEA), serve as a signal peptide directing secretion. Positions 20-26 (TKVEKNK) are excised as a propeptide. At Y46 the chain carries Tyrosine amide. The propeptide occupies 47 to 62 (GRRDMQSPLLSERLRF).

It belongs to the FARP (FMRFamide related peptide) family. As to expression, expressed by the venom duct.

Its subcellular location is the secreted. In terms of biological role, this peptide does not show activity on human and mouse sensory neuron-specific G-protein coupled receptors MRGPRX1. This chain is Conorfamide-Tx1, found in Conus textile (Cloth-of-gold cone).